The chain runs to 247 residues: Large ribosomal subunit protein uL3 (247 aa).

Disordered regions lie at residues 140 to 164 and 212 to 247; these read SHRS…KMPG and LPKE…KEGA. Glutamine 151 carries the post-translational modification N5-methylglutamine. The segment covering 232–247 has biased composition (basic and acidic residues); it reads DEDKAPADTPAEKEGA.

Belongs to the universal ribosomal protein uL3 family. Part of the 50S ribosomal subunit. Forms a cluster with proteins L14 and L19. In terms of processing, methylated by PrmB.

In terms of biological role, one of the primary rRNA binding proteins, it binds directly near the 3'-end of the 23S rRNA, where it nucleates assembly of the 50S subunit. This is Large ribosomal subunit protein uL3 from Nitrobacter winogradskyi (strain ATCC 25391 / DSM 10237 / CIP 104748 / NCIMB 11846 / Nb-255).